A 117-amino-acid chain; its full sequence is Large ribosomal subunit protein bL19 (117 aa).

It belongs to the bacterial ribosomal protein bL19 family.

Functionally, this protein is located at the 30S-50S ribosomal subunit interface and may play a role in the structure and function of the aminoacyl-tRNA binding site. In Mycoplasmopsis pulmonis (strain UAB CTIP) (Mycoplasma pulmonis), this protein is Large ribosomal subunit protein bL19.